Here is a 338-residue protein sequence, read N- to C-terminus: Holliday junction branch migration complex subunit RuvB (338 aa).

The tract at residues 1–182 is large ATPase domain (RuvB-L); the sequence is MDDRMVDQSQ…FGVHLRLEYY (182 aa). ATP is bound by residues Leu-21, Arg-22, Gly-63, Lys-66, Thr-67, Thr-68, 129-131, Arg-172, Tyr-182, and Arg-219; that span reads EDF. Thr-67 lines the Mg(2+) pocket. The small ATPAse domain (RuvB-S) stretch occupies residues 183 to 253; the sequence is KESELKDIII…TTKRALQLLQ (71 aa). Residues 256–338 are head domain (RuvB-H); the sequence is DYGLDYIDHK…KNGKRDNFEY (83 aa). Arg-292, Arg-311, and Arg-316 together coordinate DNA.

This sequence belongs to the RuvB family. In terms of assembly, homohexamer. Forms an RuvA(8)-RuvB(12)-Holliday junction (HJ) complex. HJ DNA is sandwiched between 2 RuvA tetramers; dsDNA enters through RuvA and exits via RuvB. An RuvB hexamer assembles on each DNA strand where it exits the tetramer. Each RuvB hexamer is contacted by two RuvA subunits (via domain III) on 2 adjacent RuvB subunits; this complex drives branch migration. In the full resolvosome a probable DNA-RuvA(4)-RuvB(12)-RuvC(2) complex forms which resolves the HJ.

It localises to the cytoplasm. It carries out the reaction ATP + H2O = ADP + phosphate + H(+). Its function is as follows. The RuvA-RuvB-RuvC complex processes Holliday junction (HJ) DNA during genetic recombination and DNA repair, while the RuvA-RuvB complex plays an important role in the rescue of blocked DNA replication forks via replication fork reversal (RFR). RuvA specifically binds to HJ cruciform DNA, conferring on it an open structure. The RuvB hexamer acts as an ATP-dependent pump, pulling dsDNA into and through the RuvAB complex. RuvB forms 2 homohexamers on either side of HJ DNA bound by 1 or 2 RuvA tetramers; 4 subunits per hexamer contact DNA at a time. Coordinated motions by a converter formed by DNA-disengaged RuvB subunits stimulates ATP hydrolysis and nucleotide exchange. Immobilization of the converter enables RuvB to convert the ATP-contained energy into a lever motion, pulling 2 nucleotides of DNA out of the RuvA tetramer per ATP hydrolyzed, thus driving DNA branch migration. The RuvB motors rotate together with the DNA substrate, which together with the progressing nucleotide cycle form the mechanistic basis for DNA recombination by continuous HJ branch migration. Branch migration allows RuvC to scan DNA until it finds its consensus sequence, where it cleaves and resolves cruciform DNA. This is Holliday junction branch migration complex subunit RuvB from Staphylococcus carnosus (strain TM300).